The chain runs to 102 residues: Protein translation factor SUI1 homolog (102 aa).

It belongs to the SUI1 family.

The sequence is that of Protein translation factor SUI1 homolog from Cenarchaeum symbiosum (strain A).